Here is a 213-residue protein sequence, read N- to C-terminus: Thymidine kinase (213 aa).

ATP is bound by residues 22 to 29 and 94 to 97; these read GSMFSGKT and DEAQ. The active-site Proton acceptor is glutamate 95. Residues cysteine 151, cysteine 154, cysteine 183, and cysteine 186 each contribute to the Zn(2+) site. The disordered stretch occupies residues 185–213; that stretch reads RCFQPPRPTSTSSLKAPAPAATAPRPELP. The segment covering 193–213 has biased composition (low complexity); the sequence is TSTSSLKAPAPAATAPRPELP.

It belongs to the thymidine kinase family. In terms of assembly, homotetramer.

The protein resides in the cytoplasm. It catalyses the reaction thymidine + ATP = dTMP + ADP + H(+). The protein is Thymidine kinase of Rhodothermus sp. (strain ITI 518).